A 153-amino-acid chain; its full sequence is NAD(P)H-quinone oxidoreductase subunit N (153 aa).

It belongs to the complex I NdhN subunit family. In terms of assembly, NDH-1 can be composed of about 15 different subunits; different subcomplexes with different compositions have been identified which probably have different functions.

Its subcellular location is the cellular thylakoid membrane. It carries out the reaction a plastoquinone + NADH + (n+1) H(+)(in) = a plastoquinol + NAD(+) + n H(+)(out). The catalysed reaction is a plastoquinone + NADPH + (n+1) H(+)(in) = a plastoquinol + NADP(+) + n H(+)(out). In terms of biological role, NDH-1 shuttles electrons from an unknown electron donor, via FMN and iron-sulfur (Fe-S) centers, to quinones in the respiratory and/or the photosynthetic chain. The immediate electron acceptor for the enzyme in this species is believed to be plastoquinone. Couples the redox reaction to proton translocation, and thus conserves the redox energy in a proton gradient. Cyanobacterial NDH-1 also plays a role in inorganic carbon-concentration. The sequence is that of NAD(P)H-quinone oxidoreductase subunit N from Synechococcus sp. (strain WH7803).